The following is a 130-amino-acid chain: Small ribosomal subunit protein uS8 (130 aa).

Belongs to the universal ribosomal protein uS8 family.

The protein resides in the cytoplasm. In Brassica napus (Rape), this protein is Small ribosomal subunit protein uS8 (RPS15A).